Consider the following 68-residue polypeptide: Palustrin-1c (68 aa).

A signal peptide spans 1-22; the sequence is MFTTKKSLLLLFFLGTISLSLC. Positions 23–39 are excised as a propeptide; that stretch reads EEERGADEEEGDGEKLT. An intrachain disulfide couples Cys62 to Cys68.

As to expression, expressed by the skin glands.

The protein localises to the secreted. Functionally, antimicrobial activity against Gram-negative bacterium E.coli. Stimulates insulin release. In Lithobates palustris (Pickerel frog), this protein is Palustrin-1c.